The chain runs to 204 residues: ATP-dependent Clp protease proteolytic subunit (204 aa).

Ser101 serves as the catalytic Nucleophile. The active site involves His126.

The protein belongs to the peptidase S14 family. As to quaternary structure, fourteen ClpP subunits assemble into 2 heptameric rings which stack back to back to give a disk-like structure with a central cavity, resembling the structure of eukaryotic proteasomes.

It is found in the cytoplasm. The enzyme catalyses Hydrolysis of proteins to small peptides in the presence of ATP and magnesium. alpha-casein is the usual test substrate. In the absence of ATP, only oligopeptides shorter than five residues are hydrolyzed (such as succinyl-Leu-Tyr-|-NHMec, and Leu-Tyr-Leu-|-Tyr-Trp, in which cleavage of the -Tyr-|-Leu- and -Tyr-|-Trp bonds also occurs).. Functionally, cleaves peptides in various proteins in a process that requires ATP hydrolysis. Has a chymotrypsin-like activity. Plays a major role in the degradation of misfolded proteins. In Deinococcus radiodurans (strain ATCC 13939 / DSM 20539 / JCM 16871 / CCUG 27074 / LMG 4051 / NBRC 15346 / NCIMB 9279 / VKM B-1422 / R1), this protein is ATP-dependent Clp protease proteolytic subunit.